The primary structure comprises 484 residues: UBX domain-containing protein 11 (484 aa).

A disordered region spans residues 1-28; it reads MSSPLASLSKTRKVPLESESVNPGRRGI. Residues 69–147 adopt a coiled-coil conformation; the sequence is HDSELMASMT…IGEMERFLSD (79 aa). Residues 227–291 enclose the SEP domain; that stretch reads LEPIPLKVYR…VSDLRNQIYP (65 aa). The UBX domain occupies 389-466; that stretch reads PMPLLSMLRI…GLVPNATLLL (78 aa). Phosphoserine occurs at positions 478 and 482.

Interacts with GNA12, GNA13, RND1, RND2 and RND3.

It is found in the cytoplasm. The protein localises to the cytoskeleton. Its function is as follows. May be involved in the reorganization of actin cytoskeleton mediated by RND1, RND2 and RND3. Promotes RHOA activation mediated by GNA12 and GNA13. This chain is UBX domain-containing protein 11 (Ubxn11), found in Mus musculus (Mouse).